Reading from the N-terminus, the 100-residue chain is UPF0213 protein YhbQ (100 aa).

The 76-residue stretch at Thr-2–Arg-77 folds into the GIY-YIG domain.

The protein belongs to the UPF0213 family.

This Escherichia coli O17:K52:H18 (strain UMN026 / ExPEC) protein is UPF0213 protein YhbQ.